Here is a 446-residue protein sequence, read N- to C-terminus: Trigger factor (446 aa).

Residues 163 to 248 form the PPIase FKBP-type domain; sequence GDIVTIDFKG…VRGIKRKKLA (86 aa). Residues 423 to 446 are disordered; that stretch reads SKPVPPREQGAAGETAETAEATPA. Over residues 432 to 446 the composition is skewed to low complexity; that stretch reads GAAGETAETAEATPA.

Belongs to the FKBP-type PPIase family. Tig subfamily.

The protein localises to the cytoplasm. The catalysed reaction is [protein]-peptidylproline (omega=180) = [protein]-peptidylproline (omega=0). Its function is as follows. Involved in protein export. Acts as a chaperone by maintaining the newly synthesized protein in an open conformation. Functions as a peptidyl-prolyl cis-trans isomerase. This Moorella thermoacetica (strain ATCC 39073 / JCM 9320) protein is Trigger factor.